A 730-amino-acid polypeptide reads, in one-letter code: Ribosomal RNA large subunit methyltransferase K/L (730 aa).

The 112-residue stretch at 46–157 folds into the THUMP domain; that stretch reads TAYRLCVWSR…RGEAILSLDL (112 aa). The segment at 395-418 is disordered; the sequence is ERREAQPEGTEVRQQAPQASEPAR.

It belongs to the methyltransferase superfamily. RlmKL family.

The protein localises to the cytoplasm. It catalyses the reaction guanosine(2445) in 23S rRNA + S-adenosyl-L-methionine = N(2)-methylguanosine(2445) in 23S rRNA + S-adenosyl-L-homocysteine + H(+). It carries out the reaction guanosine(2069) in 23S rRNA + S-adenosyl-L-methionine = N(2)-methylguanosine(2069) in 23S rRNA + S-adenosyl-L-homocysteine + H(+). Its function is as follows. Specifically methylates the guanine in position 2445 (m2G2445) and the guanine in position 2069 (m7G2069) of 23S rRNA. The chain is Ribosomal RNA large subunit methyltransferase K/L from Pseudomonas putida (strain GB-1).